A 1244-amino-acid chain; its full sequence is ATP-dependent RNA helicase DHX8 (1244 aa).

Residue K140 forms a Glycyl lysine isopeptide (Lys-Gly) (interchain with G-Cter in SUMO2) linkage. 2 disordered regions span residues 152–289 (LMPS…PAIG) and 361–396 (DVDQETGEDLNPNRRRNLVGETNEETSMRNPDRPTH). Over residues 160-169 (EKQRDPEHRD) the composition is skewed to basic and acidic residues. Basic residues predominate over residues 170 to 179 (RTKKKKRSRS). Basic and acidic residues predominate over residues 180–220 (RDRDRDRDRDRDRDRDRDRDRDKDRERDRDRERDRERDRER). A compositionally biased stretch (basic residues) spans 221–234 (DHKRRHRSRSRSHS). The span at 256 to 283 (FKDRKDREKYGERNLDRWRDKHVDRPPP) shows a compositional bias: basic and acidic residues. The 72-residue stretch at 289–360 (GDIYNGKVTS…TGTKTSLSMK (72 aa)) folds into the S1 motif domain. Residues 386-395 (TSMRNPDRPT) show a composition bias toward basic and acidic residues. Position 419 is a phosphoserine (S419). Residue K423 forms a Glycyl lysine isopeptide (Lys-Gly) (interchain with G-Cter in SUMO2) linkage. The residue at position 484 (S484) is a Phosphoserine. The Helicase ATP-binding domain occupies 599–762 (VQAVHDNQIL…FYEAPIFTIP (164 aa)). 612–619 (GETGSGKT) lines the ATP pocket. Positions 709-712 (DEAH) match the DEAH box motif. Residues 780-960 (YLDASLITVM…STVLSLKAMG (181 aa)) enclose the Helicase C-terminal domain.

The protein belongs to the DEAD box helicase family. DEAH subfamily. DDX8/PRP22 sub-subfamily. In terms of assembly, identified in the spliceosome C complex. Interacts with ARRB2; the interaction is detected in the nucleus upon OR1D2 stimulation. Interacts with SRRM2. Interacts with CACTIN.

The protein resides in the nucleus. It catalyses the reaction ATP + H2O = ADP + phosphate + H(+). In terms of biological role, involved in pre-mRNA splicing as component of the spliceosome. Facilitates nuclear export of spliced mRNA by releasing the RNA from the spliceosome. The chain is ATP-dependent RNA helicase DHX8 (Dhx8) from Mus musculus (Mouse).